The following is a 288-amino-acid chain: Protein sprouty homolog 3 (288 aa).

Positions 154–260 (KCVPCTAARP…GYDSLRRPGC (107 aa)) constitute an SPR domain.

The protein belongs to the sprouty family. Interacts with TESK1. Interacts with USP11. Interacts with CAV1 (via C-terminus). In terms of tissue distribution, widely expressed; particularly in the fetal tissues. Expressed in the brain with expression the highest in Purkinje cells in the cerebellum (at protein level). Expressed in the myocardium of the heart.

The protein localises to the cytoplasm. Inhibits neurite branching, arbor length and neurite complexity. Inhibits EGF-mediated p42/44 ERK signaling. Negatively regulates the MAPK cascade, resulting in a reduction of extracellular matrix protein accumulation. May function as an antagonist of fibroblast growth factor (FGF) pathways and may negatively modulate respiratory organogenesis. The chain is Protein sprouty homolog 3 from Homo sapiens (Human).